Reading from the N-terminus, the 112-residue chain is uncharacterized protein (112 aa).

N29 and N60 each carry an N-linked (GlcNAc...) asparagine; by host glycan. A helical transmembrane segment spans residues 66 to 86 (IFNGLGFILIVIFIYLLLITL).

The protein belongs to the asfivirus B117L family.

The protein localises to the host membrane. Its subcellular location is the virion. This is an uncharacterized protein from African swine fever virus (isolate Tick/South Africa/Pretoriuskop Pr4/1996) (ASFV).